We begin with the raw amino-acid sequence, 2211 residues long: Norsolorinic acid synthase stcA (2211 aa).

A starter unit:ACP transacylase (SAT) domain region spans residues 11 to 251 (FLFGDQTYDF…REIPIYVPAH (241 aa)). Residues 358–378 (PAEPPTSINKTPERYSHRPGS) form a disordered region. Residues 368–378 (TPERYSHRPGS) are compositionally biased toward basic and acidic residues. Residues 380 to 812 (RGKLAIVSMS…GGNTAVLVED (433 aa)) enclose the Ketosynthase family 3 (KS3) domain. Catalysis depends on for beta-ketoacyl synthase activity residues Cys552, His687, and His730. The interval 912-1201 (IACSGQGSQY…MAGMIKTTLD (290 aa)) is malonyl-CoA:ACP transacylase (MAT) domain. Catalysis depends on Ser1004, which acts as the For acyl/malonyl transferase activity. The tract at residues 1289 to 1316 (TATSDYQLPSDEQVAAKRPSKQDESKEA) is disordered. Positions 1327–1468 (HRVVEEKTEP…CTVRFTSEAQ (142 aa)) are N-terminal hotdog fold. Residues 1327 to 1643 (HRVVEEKTEP…LRRVPRRGLR (317 aa)) enclose the PKS/mFAS DH domain. The interval 1340–1643 (TLVVETDISR…LRRVPRRGLR (304 aa)) is product template (PT) domain. The active-site Proton acceptor; for dehydratase activity is the His1359. The tract at residues 1495 to 1643 (FIRYTTKSGY…LRRVPRRGLR (149 aa)) is C-terminal hotdog fold. The Proton donor; for dehydratase activity role is filled by Asp1555. The disordered stretch occupies residues 1655–1706 (RLHGNQQAVKTQAPQRAALKQKPQSSPTQPHASKVAYSRSATSPTAGKPVVA). Polar residues-rich tracts occupy residues 1658-1668 (GNQQAVKTQAP) and 1676-1685 (KPQSSPTQPH). Carrier domains are found at residues 1712–1791 (REGD…SGSA) and 1839–1915 (DELF…GTTS). An O-(pantetheine 4'-phosphoryl)serine mark is found at Ser1749 and Ser1873. Residues 1912–1926 (GTTSGSTTGSSGSGS) are compositionally biased toward low complexity. The tract at residues 1912-1947 (GTTSGSTTGSSGSGSSEDETDSIPSTPEEYTTADTR) is disordered. Positions 1934–1945 (IPSTPEEYTTAD) are enriched in polar residues. The tract at residues 1969 to 2205 (ILFMLPDGGG…KEHVYLVREL (237 aa)) is thioesterase/Claisen cyclase (TE/CLC) domain. Ser2039 functions as the For thioesterase activity in the catalytic mechanism.

The cofactor is pantetheine 4'-phosphate.

It carries out the reaction hexanoyl-[ACP] + 7 malonyl-CoA + 6 H(+) = noranthrone + holo-[ACP] + 7 CO2 + 7 CoA + 2 H2O. It participates in mycotoxin biosynthesis; sterigmatocystin biosynthesis. Functionally, non-reducing polyketide synthase; part of the gene cluster that mediates the biosynthesis of sterigmatocystin (ST), a polyketide-derived furanocoumarin which is part of the most toxic and carcinogenic compounds among the known mycotoxins. The first step in the biosynthesis of sterigmatocystin is the production of hexanoate by the fatty acid synthase (FAS) units stcJ and stcK. The polyketide backbone is assembled by the non-reducing polyketide synthase stcA by condensation of the starter hexanoyl-CoA and 7 malonyl-CoA extender units followed by cyclization and release of norsolorinic acid. Norsolorinic acid is the first stable intermediate in the biosynthesis of sterigmatocystin and is converted into averantin (AVN) by the ketoreductase stcE which reduces the hexanoate ketone to an alcohol. Averantin is then oxidized into 5'-hydroxyaverantin (HAVN) by the cytochrome P450 monooxygenase stcF. 5'-hydroxyaverantin is further converted to 5'-oxyaverantin (OAVN) by the 5'-hydroxyaverantin dehydrogenase stcG. The next step is the conversion of OAVN into averufin (AVF) which is catalyzed by a yet to be identified enzyme. The cytochrome P450 monooxygenase stcB and the flavin-binding monooxygenase stcW are both required for the conversion of averufin to 1-hydroxyversicolorone. The esterase stcI probably catalyzes the formation of versiconal hemiacetal acetate from 1-hydroxyversicolorone. The oxydoreductase stcN then probably catalyzes the biosynthetic step from versiconal to versicolorin B (VERB). The next step is performed by the versicolorin B desaturase stcL to produce versicolorin A (VERA). The ketoreductase stcU and the cytochrome P450 monooxygenase stcS are involved in the conversion of versicolorin A to demethylsterigmatocystin. The Baeyer-Villiger oxidas stcQ and the reductase stcR might be involved in the biosynthetic step from versicolorin A to demethylsterigmatocystin. The final step in the biosynthesis of sterigmatocystin is the methylation of demethylsterigmatocystin catalyzed by the methyltransferase stcP. The chain is Norsolorinic acid synthase stcA from Emericella nidulans (strain FGSC A4 / ATCC 38163 / CBS 112.46 / NRRL 194 / M139) (Aspergillus nidulans).